Consider the following 83-residue polypeptide: Small ribosomal subunit protein bS16 (83 aa).

This sequence belongs to the bacterial ribosomal protein bS16 family.

In Pseudoalteromonas atlantica (strain T6c / ATCC BAA-1087), this protein is Small ribosomal subunit protein bS16.